The chain runs to 223 residues: uncharacterized protein (223 aa).

A disordered region spans residues 1–30 (MASATVRNVPLLDDDTIPFGEEDEMRDPSR). Residues 12–25 (LDDDTIPFGEEDEM) show a composition bias toward acidic residues. 4 consecutive transmembrane segments (helical) span residues 35 to 55 (YTHP…ILIY), 56 to 76 (MFCG…VLFL), 129 to 149 (IFWL…LFAL), and 154 to 174 (FKWL…LYGY).

The protein belongs to the TVP23 family.

The protein localises to the membrane. This is an uncharacterized protein from Drosophila melanogaster (Fruit fly).